The following is a 215-amino-acid chain: Leucyl/phenylalanyl-tRNA--protein transferase (215 aa).

It belongs to the L/F-transferase family.

It is found in the cytoplasm. It catalyses the reaction N-terminal L-lysyl-[protein] + L-leucyl-tRNA(Leu) = N-terminal L-leucyl-L-lysyl-[protein] + tRNA(Leu) + H(+). It carries out the reaction N-terminal L-arginyl-[protein] + L-leucyl-tRNA(Leu) = N-terminal L-leucyl-L-arginyl-[protein] + tRNA(Leu) + H(+). The catalysed reaction is L-phenylalanyl-tRNA(Phe) + an N-terminal L-alpha-aminoacyl-[protein] = an N-terminal L-phenylalanyl-L-alpha-aminoacyl-[protein] + tRNA(Phe). Functions in the N-end rule pathway of protein degradation where it conjugates Leu, Phe and, less efficiently, Met from aminoacyl-tRNAs to the N-termini of proteins containing an N-terminal arginine or lysine. This chain is Leucyl/phenylalanyl-tRNA--protein transferase, found in Campylobacter jejuni (strain RM1221).